The following is a 472-amino-acid chain: tRNA modification GTPase MnmE (472 aa).

R28, E91, and K130 together coordinate (6S)-5-formyl-5,6,7,8-tetrahydrofolate. A TrmE-type G domain is found at 225–391 (GAKVVLAGKT…LSEKAYSVLA (167 aa)). Residue N235 coordinates K(+). GTP-binding positions include 235–240 (NAGKSS), 254–260 (SDIHGTT), and 279–282 (DTAG). S239 is a binding site for Mg(2+). S254, I256, and T259 together coordinate K(+). Residue T260 participates in Mg(2+) binding. K472 is a (6S)-5-formyl-5,6,7,8-tetrahydrofolate binding site.

This sequence belongs to the TRAFAC class TrmE-Era-EngA-EngB-Septin-like GTPase superfamily. TrmE GTPase family. As to quaternary structure, homodimer. Heterotetramer of two MnmE and two MnmG subunits. K(+) serves as cofactor.

It is found in the cytoplasm. Its function is as follows. Exhibits a very high intrinsic GTPase hydrolysis rate. Involved in the addition of a carboxymethylaminomethyl (cmnm) group at the wobble position (U34) of certain tRNAs, forming tRNA-cmnm(5)s(2)U34. This is tRNA modification GTPase MnmE from Treponema denticola (strain ATCC 35405 / DSM 14222 / CIP 103919 / JCM 8153 / KCTC 15104).